The following is an 81-amino-acid chain: Exodeoxyribonuclease 7 small subunit (81 aa).

The disordered stretch occupies residues 61–81 (MNDSDQEVAFETPQGGTGDAD).

This sequence belongs to the XseB family. As to quaternary structure, heterooligomer composed of large and small subunits.

The protein resides in the cytoplasm. The enzyme catalyses Exonucleolytic cleavage in either 5'- to 3'- or 3'- to 5'-direction to yield nucleoside 5'-phosphates.. Bidirectionally degrades single-stranded DNA into large acid-insoluble oligonucleotides, which are then degraded further into small acid-soluble oligonucleotides. The chain is Exodeoxyribonuclease 7 small subunit from Levilactobacillus brevis (strain ATCC 367 / BCRC 12310 / CIP 105137 / JCM 1170 / LMG 11437 / NCIMB 947 / NCTC 947) (Lactobacillus brevis).